Reading from the N-terminus, the 94-residue chain is Putative pterin-4-alpha-carbinolamine dehydratase (94 aa).

Belongs to the pterin-4-alpha-carbinolamine dehydratase family.

It carries out the reaction (4aS,6R)-4a-hydroxy-L-erythro-5,6,7,8-tetrahydrobiopterin = (6R)-L-erythro-6,7-dihydrobiopterin + H2O. The polypeptide is Putative pterin-4-alpha-carbinolamine dehydratase (Mycobacterium avium (strain 104)).